The sequence spans 404 residues: Cysteine desulfurase IscS (404 aa).

Pyridoxal 5'-phosphate is bound by residues 75–76 (AT), Asn-155, Gln-183, and 203–205 (SGH). Lys-206 bears the N6-(pyridoxal phosphate)lysine mark. Thr-243 is a pyridoxal 5'-phosphate binding site. Catalysis depends on Cys-328, which acts as the Cysteine persulfide intermediate. Cys-328 is a [2Fe-2S] cluster binding site.

This sequence belongs to the class-V pyridoxal-phosphate-dependent aminotransferase family. NifS/IscS subfamily. As to quaternary structure, homodimer. Forms a heterotetramer with IscU, interacts with other sulfur acceptors. Pyridoxal 5'-phosphate is required as a cofactor.

The protein localises to the cytoplasm. It catalyses the reaction (sulfur carrier)-H + L-cysteine = (sulfur carrier)-SH + L-alanine. It functions in the pathway cofactor biosynthesis; iron-sulfur cluster biosynthesis. In terms of biological role, master enzyme that delivers sulfur to a number of partners involved in Fe-S cluster assembly, tRNA modification or cofactor biosynthesis. Catalyzes the removal of elemental sulfur and selenium atoms from cysteine and selenocysteine to produce alanine. Functions as a sulfur delivery protein for Fe-S cluster synthesis onto IscU, an Fe-S scaffold assembly protein, as well as other S acceptor proteins. Also functions as a selenium delivery protein in the pathway for the biosynthesis of selenophosphate. This is Cysteine desulfurase IscS from Salmonella arizonae (strain ATCC BAA-731 / CDC346-86 / RSK2980).